The chain runs to 58 residues: MLGWTLVFLVVAVIAGLLGFTGIAGAAAGIAKIIFLIFIVLLVISLLVNAFRGKSPRL.

2 helical membrane passes run 6–26 and 28–48; these read LVFL…IAGA and AGIA…SLLV.

This sequence belongs to the UPF0391 family.

It localises to the cell membrane. The protein is UPF0391 membrane protein Sbal_1421 of Shewanella baltica (strain OS155 / ATCC BAA-1091).